The chain runs to 519 residues: Putative lipase ATG15 (519 aa).

Residues Met1–Gly5 are Cytoplasmic-facing. The helical; Signal-anchor for type II membrane protein transmembrane segment at Pro6–Ser26 threads the bilayer. At Ser27 to Asn519 the chain is on the lumenal side. Asn48, Asn133, Asn196, Asn220, Asn302, and Asn309 each carry an N-linked (GlcNAc...) asparagine glycan. Ser318 (charge relay system) is an active-site residue. N-linked (GlcNAc...) asparagine glycosylation is present at Asn361. The tract at residues Arg481 to Val502 is disordered.

It belongs to the AB hydrolase superfamily. Lipase family. In terms of assembly, binds to both phosphatidylinositol (PI) and phosphatidylinositol 3,5-bisphosphate (PIP2).

It is found in the endosome. The protein localises to the multivesicular body membrane. Its subcellular location is the prevacuolar compartment membrane. It carries out the reaction a triacylglycerol + H2O = a diacylglycerol + a fatty acid + H(+). Functionally, lipase which is essential for lysis of subvacuolar cytoplasm to vacuole targeted bodies and intravacuolar autophagic bodies. Involved in the lysis of intravacuolar multivesicular body (MVB) vesicles. The intravacuolar membrane disintegration by ATG15 is critical to life span extension. The chain is Putative lipase ATG15 (ATG15) from Cryptococcus neoformans var. neoformans serotype D (strain B-3501A) (Filobasidiella neoformans).